A 106-amino-acid chain; its full sequence is Antitoxin MazE3 (106 aa).

As to quaternary structure, forms a complex with cognate toxin MazF3, possibly with 1:1 stoichiometry.

Functionally, antitoxin component of a type II toxin-antitoxin (TA) system. Upon expression in E.coli and M.smegmatis neutralizes the effect of cognate toxin MazF3. Overexpression of MazE3 alone decreased persister cells formation in M.smegmatis upon challenge with gentamicin or kanamycin. The polypeptide is Antitoxin MazE3 (mazE3) (Mycobacterium tuberculosis (strain ATCC 25618 / H37Rv)).